We begin with the raw amino-acid sequence, 241 residues long: Large ribosomal subunit protein bL25 (241 aa).

Residues 214-241 (LDAVKAGEEGSRAQQETEEASERADQGQ) form a disordered region.

This sequence belongs to the bacterial ribosomal protein bL25 family. CTC subfamily. Part of the 50S ribosomal subunit; part of the 5S rRNA/L5/L18/L25 subcomplex. Contacts the 5S rRNA. Binds to the 5S rRNA independently of L5 and L18.

Functionally, this is one of the proteins that binds to the 5S RNA in the ribosome where it forms part of the central protuberance. The chain is Large ribosomal subunit protein bL25 from Deinococcus geothermalis (strain DSM 11300 / CIP 105573 / AG-3a).